The following is a 622-amino-acid chain: Pyranose 2-oxidase (622 aa).

A signal peptide spans 1-28; sequence MSTSSSDPFYNFAKTSFKSAAAQKASAT. A propeptide spanning residues 29 to 38 is cleaved from the precursor; the sequence is SLPPLPGPDQ. H167 bears the Tele-8alpha-FAD histidine mark. Substrate contacts are provided by Q448 and H450. Residue H548 is the Proton acceptor of the active site. Residue N593 is part of the active site.

This sequence belongs to the GMC oxidoreductase family. As to quaternary structure, homotetramer. FAD serves as cofactor.

It localises to the periplasm. The catalysed reaction is D-glucose + O2 = 2-dehydro-D-glucose + H2O2. Functionally, catalyzes the oxidation of various aldopyranoses and disaccharides on carbon-2 to the corresponding 2-keto sugars concomitant with the reduction of O(2) to H(2)O(2). Plays an important role in lignin degradation of wood rot fungi by supplying the essential cosubstrate H(2)O(2) for the ligninolytic peroxidases, lignin peroxidase and manganese-dependent peroxidase. This is Pyranose 2-oxidase (p2ox) from Trametes pubescens (White-rot fungus).